A 239-amino-acid polypeptide reads, in one-letter code: Uridylate kinase (239 aa).

13–16 (KVSG) is an ATP binding site. Position 55 (glycine 55) interacts with UMP. The ATP site is built by glycine 56 and arginine 60. Residues aspartate 75 and 136–143 (TGNPFFTT) each bind UMP. Residues threonine 163, glutamine 164, tyrosine 169, and aspartate 172 each contribute to the ATP site.

Belongs to the UMP kinase family. In terms of assembly, homohexamer.

It is found in the cytoplasm. The enzyme catalyses UMP + ATP = UDP + ADP. It functions in the pathway pyrimidine metabolism; CTP biosynthesis via de novo pathway; UDP from UMP (UMPK route): step 1/1. Its activity is regulated as follows. Inhibited by UTP. Catalyzes the reversible phosphorylation of UMP to UDP. In Bartonella bacilliformis (strain ATCC 35685 / KC583 / Herrer 020/F12,63), this protein is Uridylate kinase.